The chain runs to 369 residues: Uroporphyrinogen decarboxylase (369 aa).

Substrate-binding positions include 36–40 (RQAGR), Asp86, Tyr162, Ser217, and His342.

The protein belongs to the uroporphyrinogen decarboxylase family. Homodimer.

It localises to the cytoplasm. The enzyme catalyses uroporphyrinogen III + 4 H(+) = coproporphyrinogen III + 4 CO2. It functions in the pathway porphyrin-containing compound metabolism; protoporphyrin-IX biosynthesis; coproporphyrinogen-III from 5-aminolevulinate: step 4/4. In terms of biological role, catalyzes the decarboxylation of four acetate groups of uroporphyrinogen-III to yield coproporphyrinogen-III. This chain is Uroporphyrinogen decarboxylase, found in Albidiferax ferrireducens (strain ATCC BAA-621 / DSM 15236 / T118) (Rhodoferax ferrireducens).